The chain runs to 329 residues: tRNA dimethylallyltransferase (329 aa).

ATP is bound at residue 24–31; the sequence is GSTGIGKT. 26–31 contacts substrate; that stretch reads TGIGKT. An interaction with substrate tRNA region spans residues 49–52; that stretch reads DSMQ.

This sequence belongs to the IPP transferase family. In terms of assembly, monomer. Mg(2+) is required as a cofactor.

The catalysed reaction is adenosine(37) in tRNA + dimethylallyl diphosphate = N(6)-dimethylallyladenosine(37) in tRNA + diphosphate. In terms of biological role, catalyzes the transfer of a dimethylallyl group onto the adenine at position 37 in tRNAs that read codons beginning with uridine, leading to the formation of N6-(dimethylallyl)adenosine (i(6)A). This is tRNA dimethylallyltransferase from Methylacidiphilum infernorum (isolate V4) (Methylokorus infernorum (strain V4)).